A 375-amino-acid polypeptide reads, in one-letter code: Putative glutamate--cysteine ligase 2 (375 aa).

This sequence belongs to the glutamate--cysteine ligase type 2 family. YbdK subfamily.

The catalysed reaction is L-cysteine + L-glutamate + ATP = gamma-L-glutamyl-L-cysteine + ADP + phosphate + H(+). Functionally, ATP-dependent carboxylate-amine ligase which exhibits weak glutamate--cysteine ligase activity. The protein is Putative glutamate--cysteine ligase 2 of Azoarcus sp. (strain BH72).